Here is a 337-residue protein sequence, read N- to C-terminus: 1-aminocyclopropane-1-carboxylate deaminase (337 aa).

The residue at position 50 (Lys-50) is an N6-(pyridoxal phosphate)lysine. The active-site Nucleophile is the Ser-77.

The protein belongs to the ACC deaminase/D-cysteine desulfhydrase family. As to quaternary structure, homotrimer. Pyridoxal 5'-phosphate serves as cofactor.

The enzyme catalyses 1-aminocyclopropane-1-carboxylate + H2O = 2-oxobutanoate + NH4(+). Its function is as follows. Catalyzes a cyclopropane ring-opening reaction, the irreversible conversion of 1-aminocyclopropane-1-carboxylate (ACC) to ammonia and alpha-ketobutyrate. Allows growth on ACC as a nitrogen source. This chain is 1-aminocyclopropane-1-carboxylate deaminase, found in Methylobacterium nodulans (strain LMG 21967 / CNCM I-2342 / ORS 2060).